The following is a 472-amino-acid chain: Serine/threonine-protein kinase sax-1 (472 aa).

Positions 87–381 (FESLKVIGRG…LDEIKQCPFF (295 aa)) constitute a Protein kinase domain. Residues 93–101 (IGRGAFGEV) and Lys-116 contribute to the ATP site. Asp-210 serves as the catalytic Proton acceptor. The AGC-kinase C-terminal domain occupies 382 to 452 (RRIDWNHIRE…KRFDGLTQKM (71 aa)).

It belongs to the protein kinase superfamily. AGC Ser/Thr protein kinase family. Requires Mg(2+) as cofactor.

It is found in the cytoplasm. Its subcellular location is the nucleus. The enzyme catalyses L-seryl-[protein] + ATP = O-phospho-L-seryl-[protein] + ADP + H(+). It carries out the reaction L-threonyl-[protein] + ATP = O-phospho-L-threonyl-[protein] + ADP + H(+). In terms of biological role, acts with sax-2 to restrict the growth of both primary and secondary neurites. Regulates mechanosensory tiling by controlling the termination point of sensory dendrites. In Caenorhabditis briggsae, this protein is Serine/threonine-protein kinase sax-1.